The following is a 334-amino-acid chain: 2,3-bisphosphoglycerate-dependent phosphoglycerate mutase 1 (334 aa).

A chloroplast-targeting transit peptide spans 1–48 (MATATSHQSVVSFASLRSSPSSTISQCGFKIDSSLSFTSKKTNFCKIK). Residues 84 to 91 (RHGESLWN), 97 to 98 (TG), Arg-134, 188 to 191 (ERMY), Lys-199, 215 to 216 (RR), and 259 to 260 (GN) each bind substrate. His-85 acts as the Tele-phosphohistidine intermediate in catalysis. Glu-188 functions as the Proton donor/acceptor in the catalytic mechanism.

Belongs to the phosphoglycerate mutase family. BPG-dependent PGAM subfamily.

The protein resides in the plastid. The protein localises to the chloroplast. The catalysed reaction is (2R)-2-phosphoglycerate = (2R)-3-phosphoglycerate. It functions in the pathway carbohydrate degradation; glycolysis; pyruvate from D-glyceraldehyde 3-phosphate: step 3/5. Functionally, catalyzes the interconversion of 2-phosphoglycerate and 3-phosphoglycerate. This is 2,3-bisphosphoglycerate-dependent phosphoglycerate mutase 1 from Arabidopsis thaliana (Mouse-ear cress).